Here is a 147-residue protein sequence, read N- to C-terminus: Myoglobin (147 aa).

A2 is modified (N-acetylalanine). The 140-residue stretch at A2 to K141 folds into the Globin domain. H60 provides a ligand contact to nitrite. An O2-binding site is contributed by H60. H89 contacts heme b.

Belongs to the globin family. As to quaternary structure, monomeric.

It is found in the cytoplasm. The protein resides in the sarcoplasm. It catalyses the reaction Fe(III)-heme b-[protein] + nitric oxide + H2O = Fe(II)-heme b-[protein] + nitrite + 2 H(+). The enzyme catalyses H2O2 + AH2 = A + 2 H2O. Its function is as follows. Monomeric heme protein which primary function is to store oxygen and facilitate its diffusion within muscle tissues. Reversibly binds oxygen through a pentacoordinated heme iron and enables its timely and efficient release as needed during periods of heightened demand. Depending on the oxidative conditions of tissues and cells, and in addition to its ability to bind oxygen, it also has a nitrite reductase activity whereby it regulates the production of bioactive nitric oxide. Under stress conditions, like hypoxia and anoxia, it also protects cells against reactive oxygen species thanks to its pseudoperoxidase activity. In Thunnus albacares (Yellowfin tuna), this protein is Myoglobin (mb).